A 347-amino-acid polypeptide reads, in one-letter code: Dehydratase asqC (347 aa).

The N-terminal stretch at M1–A18 is a signal peptide. N-linked (GlcNAc...) asparagine glycans are attached at residues N51, N103, N131, N143, N215, N264, and N281.

The enzyme catalyses [(1'E)-5'-(3',3'-dimethyloxiran-2'-yl)-3'-hydroxy-3'-methylpent-1'-en-1'-yl]-quinolinone B = (1'E,3'E)-5-(3,3-dimethyloxiran-2-yl)-3-methylhexa-1,3-dienyl-quinolinone B + H2O. Its pathway is secondary metabolite biosynthesis. The protein operates within alkaloid biosynthesis. It participates in mycotoxin biosynthesis. Its function is as follows. Dehydratase; part of the gene cluster that mediates the biosynthesis of the aspoquinolone mycotoxins. Within the pathway, the dehydratase asqC catalyzes the dehydratation of the epoxide at C-3 to produce (1'E,3'E)-5-(3,3-dimethyloxiran-2-yl)-3-methylhexa-1,3-dienyl-quinolinone B. The first step of the pathway is catalyzed by the nonribosomal peptide synthetase asqK that condenses anthranilic acid and O-methyl-L-tyrosine to produce 4'-methoxycyclopeptin. 4'-methoxycyclopeptin is then converted to 4'-methoxydehydrocyclopeptin by the ketoglutarate-dependent dioxygenase asqJ. AsqJ also converts its first product 4'-methoxydehydrocyclopeptin to 4'-methoxycyclopenin. The following conversion of 4'-methoxycyclopenin into 4'-methoxyviridicatin is catalyzed by the cyclopenase asqI. 4'-methoxyviridicatin is the precursor of quinolone natural products, and is further converted to quinolinone B. The prenyltransferase asqH1 then catalyzes the canonical Friedel-Crafts alkylation of quinolinone B with dimethylallyl cation to yield dimethylallyl quinolone, which is subjected to FAD-dependent dehydrogenation by the FAD-linked oxidoreductase asqF to yield conjugated aryl diene. The delta(3') double bond then serves as the site of the second alkylation with DMAPP catalyzed by the prenyltransferase asqH2 to yield a carbenium ion intermediate, which can be attacked by H(2)O to yield a styrenyl quinolone containing a C3'-hydroxyprenyl chain. The FAD-dependent monooxygenase asqG performs epoxidation of the terminal C7'-C8' olefin. Finally, after dehydratation of the epoxide at C3 by asqC, the quinolone epoxide rearrangement protein asqO catalyzes an enzymatic 3-exo-tet cyclization to yield the cyclopropyl-THF ring system in aspoquinolone. This is Dehydratase asqC from Emericella nidulans (strain FGSC A4 / ATCC 38163 / CBS 112.46 / NRRL 194 / M139) (Aspergillus nidulans).